The following is a 189-amino-acid chain: Large ribosomal subunit protein bL17 (189 aa).

Residues 126–189 (DRARRVKASQ…DADADEAPQN (64 aa)) form a disordered region. Residues 139–180 (QDAPSEPQAAEEPAAEEAVAATEAVAAPADAEATDAEAGSAD) are compositionally biased toward low complexity.

The protein belongs to the bacterial ribosomal protein bL17 family. Part of the 50S ribosomal subunit. Contacts protein L32.

The polypeptide is Large ribosomal subunit protein bL17 (Mycobacterium marinum (strain ATCC BAA-535 / M)).